Reading from the N-terminus, the 133-residue chain is MSGISDPVSNYMAQLRNAQEAEQTYVDIPASKLKRAMTQILLEKGYIKNFVNIDDEKQGLLRVYLKYDEYDQPAIRMLERVSRPGRREYADSDNLPEVKNGLGIVILSTSRGVMSDKEARRFGVGGEVLAKVF.

This sequence belongs to the universal ribosomal protein uS8 family. In terms of assembly, part of the 30S ribosomal subunit. Contacts proteins S5 and S12.

Functionally, one of the primary rRNA binding proteins, it binds directly to 16S rRNA central domain where it helps coordinate assembly of the platform of the 30S subunit. The chain is Small ribosomal subunit protein uS8 from Salinibacter ruber (strain DSM 13855 / M31).